We begin with the raw amino-acid sequence, 193 residues long: GTP cyclohydrolase-2 (193 aa).

45-49 (RIHSE) lines the GTP pocket. 3 residues coordinate Zn(2+): cysteine 50, cysteine 61, and cysteine 63. Residues glutamine 66, 87–89 (EGR), and threonine 109 contribute to the GTP site. Aspartate 121 acts as the Proton acceptor in catalysis. Arginine 123 (nucleophile) is an active-site residue. GTP contacts are provided by threonine 144 and lysine 149.

Belongs to the GTP cyclohydrolase II family. Zn(2+) serves as cofactor.

The enzyme catalyses GTP + 4 H2O = 2,5-diamino-6-hydroxy-4-(5-phosphoribosylamino)-pyrimidine + formate + 2 phosphate + 3 H(+). It participates in cofactor biosynthesis; riboflavin biosynthesis; 5-amino-6-(D-ribitylamino)uracil from GTP: step 1/4. In terms of biological role, catalyzes the conversion of GTP to 2,5-diamino-6-ribosylamino-4(3H)-pyrimidinone 5'-phosphate (DARP), formate and pyrophosphate. This chain is GTP cyclohydrolase-2, found in Campylobacter hominis (strain ATCC BAA-381 / DSM 21671 / CCUG 45161 / LMG 19568 / NCTC 13146 / CH001A).